The primary structure comprises 177 residues: Cytidylate kinase (177 aa).

8–16 (GPPGGGKTT) provides a ligand contact to ATP.

Belongs to the cytidylate kinase family. Type 2 subfamily.

Its subcellular location is the cytoplasm. The enzyme catalyses CMP + ATP = CDP + ADP. The catalysed reaction is dCMP + ATP = dCDP + ADP. This is Cytidylate kinase from Staphylothermus marinus (strain ATCC 43588 / DSM 3639 / JCM 9404 / F1).